A 58-amino-acid chain; its full sequence is uncharacterized protein (58 aa).

A run of 2 helical transmembrane segments spans residues 5 to 25 (IAFEFFIMIALGIFIGYIIAE) and 32 to 52 (WIVVFLLLGIFCAFGRLFKMI).

The protein resides in the cell membrane. This is an uncharacterized protein from Methanocaldococcus jannaschii (strain ATCC 43067 / DSM 2661 / JAL-1 / JCM 10045 / NBRC 100440) (Methanococcus jannaschii).